The following is a 443-amino-acid chain: tRNA(Ile2) 2-agmatinylcytidine synthetase TiaS (443 aa).

This sequence belongs to the TiaS family.

The protein localises to the cytoplasm. It catalyses the reaction cytidine(34) in tRNA(Ile2) + agmatine + ATP + H2O = 2-agmatinylcytidine(34) in tRNA(Ile2) + AMP + 2 phosphate + 2 H(+). Functionally, ATP-dependent agmatine transferase that catalyzes the formation of 2-agmatinylcytidine (agm2C) at the wobble position (C34) of tRNA(Ile2), converting the codon specificity from AUG to AUA. In Saccharolobus islandicus (strain L.S.2.15 / Lassen #1) (Sulfolobus islandicus), this protein is tRNA(Ile2) 2-agmatinylcytidine synthetase TiaS.